The following is a 137-amino-acid chain: Nucleoside diphosphate kinase (137 aa).

Residues Lys10, Phe58, Arg86, Thr92, Arg103, and Asn113 each coordinate ATP. The active-site Pros-phosphohistidine intermediate is His116.

This sequence belongs to the NDK family. As to quaternary structure, homotetramer. Requires Mg(2+) as cofactor.

It is found in the cytoplasm. The enzyme catalyses a 2'-deoxyribonucleoside 5'-diphosphate + ATP = a 2'-deoxyribonucleoside 5'-triphosphate + ADP. It carries out the reaction a ribonucleoside 5'-diphosphate + ATP = a ribonucleoside 5'-triphosphate + ADP. Major role in the synthesis of nucleoside triphosphates other than ATP. The ATP gamma phosphate is transferred to the NDP beta phosphate via a ping-pong mechanism, using a phosphorylated active-site intermediate. This is Nucleoside diphosphate kinase from Helicobacter pylori (strain Shi470).